Reading from the N-terminus, the 402-residue chain is MNHPQPITMPIPGHIDPVPVPRDLKPRVDGRIDLLGLSRDDLRMALETAQLEPRQAKLRAKQLWHWIYNRGATDFAVMTDIAKDMRGWLDQRFVVSRPEVVEAQVSTDGTRKWLLRSDDGQDYEMVFIPDADRGTLCVSSQVGCTLNCRFCHTGTMKLVRNLTPAEIVGQVMLARDALGEWPSQPEGRMLTNIVMMGMGEPLYNFDNVRDALKLVMDGDGLALSKRRITLSTAGVVPMMARAGEEIGVNLAVSLHAITKEVRDEIVPLNRKYGIEDLLQACADYPGANNARRITFEYVMLKDKNDRDEDALELVRLIRKYRLPAKVNLIPFNPWPGAPYECSDPDRVARFSDLIFKAGISAPVRTPRGRDIMAACGQLKSAAEKKSRAELDRMAAEKQAALG.

The active-site Proton acceptor is the E124. One can recognise a Radical SAM core domain in the interval 130 to 370 (DADRGTLCVS…APVRTPRGRD (241 aa)). A disulfide bridge connects residues C137 and C375. Residues C144, C148, and C151 each contribute to the [4Fe-4S] cluster site. S-adenosyl-L-methionine is bound by residues 199 to 200 (GE), S231, 253 to 255 (SLH), and N332. The active-site S-methylcysteine intermediate is C375.

This sequence belongs to the radical SAM superfamily. RlmN family. The cofactor is [4Fe-4S] cluster.

Its subcellular location is the cytoplasm. It carries out the reaction adenosine(2503) in 23S rRNA + 2 reduced [2Fe-2S]-[ferredoxin] + 2 S-adenosyl-L-methionine = 2-methyladenosine(2503) in 23S rRNA + 5'-deoxyadenosine + L-methionine + 2 oxidized [2Fe-2S]-[ferredoxin] + S-adenosyl-L-homocysteine. The catalysed reaction is adenosine(37) in tRNA + 2 reduced [2Fe-2S]-[ferredoxin] + 2 S-adenosyl-L-methionine = 2-methyladenosine(37) in tRNA + 5'-deoxyadenosine + L-methionine + 2 oxidized [2Fe-2S]-[ferredoxin] + S-adenosyl-L-homocysteine. Specifically methylates position 2 of adenine 2503 in 23S rRNA and position 2 of adenine 37 in tRNAs. m2A2503 modification seems to play a crucial role in the proofreading step occurring at the peptidyl transferase center and thus would serve to optimize ribosomal fidelity. The chain is Dual-specificity RNA methyltransferase RlmN from Rhizorhabdus wittichii (strain DSM 6014 / CCUG 31198 / JCM 15750 / NBRC 105917 / EY 4224 / RW1) (Sphingomonas wittichii).